Here is a 117-residue protein sequence, read N- to C-terminus: Tyrosine-protein phosphatase 25 (117 aa).

In terms of domain architecture, Tyrosine-protein phosphatase spans 1-117 (WLMIIEQKCN…DLIGQSPIVV (117 aa)). Asp-85 lines the substrate pocket.

Belongs to the protein-tyrosine phosphatase family.

The catalysed reaction is O-phospho-L-tyrosyl-[protein] + H2O = L-tyrosyl-[protein] + phosphate. The protein is Tyrosine-protein phosphatase 25 (STY-25) of Styela plicata (Wrinkled sea squirt).